Reading from the N-terminus, the 345-residue chain is Nicotinate-nucleotide--dimethylbenzimidazole phosphoribosyltransferase (345 aa).

Glutamate 312 acts as the Proton acceptor in catalysis.

It belongs to the CobT family.

The catalysed reaction is 5,6-dimethylbenzimidazole + nicotinate beta-D-ribonucleotide = alpha-ribazole 5'-phosphate + nicotinate + H(+). The protein operates within nucleoside biosynthesis; alpha-ribazole biosynthesis; alpha-ribazole from 5,6-dimethylbenzimidazole: step 1/2. In terms of biological role, catalyzes the synthesis of alpha-ribazole-5'-phosphate from nicotinate mononucleotide (NAMN) and 5,6-dimethylbenzimidazole (DMB). The sequence is that of Nicotinate-nucleotide--dimethylbenzimidazole phosphoribosyltransferase from Phocaeicola vulgatus (strain ATCC 8482 / DSM 1447 / JCM 5826 / CCUG 4940 / NBRC 14291 / NCTC 11154) (Bacteroides vulgatus).